A 319-amino-acid chain; its full sequence is Free fatty acid receptor 3 (319 aa).

Over 1–15 the chain is Extracellular; it reads MGTSFFLGNYWLFFS. The chain crosses the membrane as a helical span at residues 16–36; the sequence is VYLLVFLVGLPLNVMALVVFV. The Cytoplasmic segment spans residues 37 to 43; the sequence is GKLRRRP. Residues 44 to 64 form a helical membrane-spanning segment; the sequence is VAVDLLLLNLTISDLLLLLFL. At 65 to 98 the chain is on the extracellular side; sequence PFRMVEAACGMRWLLPFIFCPLSGFLFFTTIYLT. Cysteine 84 and cysteine 165 are disulfide-bonded. The chain crosses the membrane as a helical span at residues 99 to 119; the sequence is SLFLTAVSIERFLSVAYPLWY. At 120–127 the chain is on the cytoplasmic side; it reads KTRPRLAQ. The chain crosses the membrane as a helical span at residues 128–148; the sequence is AGLVSVVCWFLASAHCSVVYI. At 149-183 the chain is on the extracellular side; the sequence is TEYWGNATYSQGTNGTCYLEFREDQLAILLPVRLE. N-linked (GlcNAc...) asparagine glycans are attached at residues asparagine 154 and asparagine 162. A helical transmembrane segment spans residues 184-206; that stretch reads MAVVLFMVPLCITSYCYSRLVWI. Over 207–218 the chain is Cytoplasmic; the sequence is LSRGASRRRRKR. Residues 219–239 form a helical membrane-spanning segment; it reads IMGLLAATLLIFFVCFGPYNM. The Extracellular segment spans residues 240–254; sequence SHVVGYVSRESPSWR. Residues 255–275 form a helical membrane-spanning segment; it reads SYVLLLSTLNSCIDPLVFYFS. Topologically, residues 276-319 are cytoplasmic; it reads SSKFQADFHQLLGRLLRTCVPWTQQVSLELKVKNGEEPSKECPS.

The protein belongs to the G-protein coupled receptor 1 family. In terms of tissue distribution, expressed in white adipose tissue and skeletal muscle (at protein level). Abundantly expressed in sympathetic ganglia such as the superior cervical ganglion. Also expressed by intestinal endocrine cells.

It localises to the cell membrane. In terms of biological role, g protein-coupled receptor that is activated by a major product of dietary fiber digestion, the short chain fatty acids (SCFAs), and that plays a role in the regulation of whole-body energy homeostasis and in intestinal immunity. In omnivorous mammals, the short chain fatty acids acetate, propionate and butyrate are produced primarily by the gut microbiome that metabolizes dietary fibers. SCFAs serve as a source of energy but also act as signaling molecules. That G protein-coupled receptor is probably coupled to the pertussis toxin-sensitive, G(i/o)-alpha family of G proteins. Its activation results in the formation of inositol 1,4,5-trisphosphate, the mobilization of intracellular calcium, the phosphorylation of the MAPK3/ERK1 and MAPK1/ERK2 kinases and the inhibition of intracellular cAMP accumulation. Activated by SCFAs and by beta-hydroxybutyrate, a ketone body produced by the liver upon starvation, it inhibits N-type calcium channels and modulates the activity of sympathetic neurons through a signaling cascade involving the beta and gamma subunits of its coupled G protein, phospholipase C and MAP kinases. Thereby, it may regulate energy expenditure through the control of the sympathetic nervous system that controls for instance heart rate. Upon activation by SCFAs accumulating in the intestine, it may also signal to the brain via neural circuits which in turn would regulate intestinal gluconeogenesis. May also control the production of hormones involved in whole-body energy homeostasis. May for instance, regulate blood pressure through renin secretion. May also regulate secretion of the PYY peptide by enteroendocrine cells and control gut motility, intestinal transit rate, and the harvesting of energy from SCFAs produced by gut microbiota. May also indirectly regulate the production of LEP/Leptin, a hormone acting on the CNS to inhibit food intake, in response to the presence of short-chain fatty acids in the intestine. Finally, may also play a role in glucose homeostasis. Besides its role in energy homeostasis, may play a role in intestinal immunity. May mediate the activation of the inflammatory and immune response by SCFAs in the gut, regulating the rapid production of chemokines and cytokines by intestinal epithelial cells. Exhibits an SCFA-independent constitutive G protein-coupled receptor activity. The protein is Free fatty acid receptor 3 (Ffar3) of Mus musculus (Mouse).